The following is a 181-amino-acid chain: Early E3 20.3 kDa glycoprotein (181 aa).

Residues Asn29, Asn57, Asn70, and Asn75 are each glycosylated (N-linked (GlcNAc...) asparagine; by host).

This sequence belongs to the adenoviridae E3_20 family.

E3 proteins seem to be dispensable for virus growth in tissue culture cells. They are potentially important for virus growth under special conditions; E3 region may help adenoviruses to evade the immune surveillance of the host. In Homo sapiens (Human), this protein is Early E3 20.3 kDa glycoprotein.